A 143-amino-acid chain; its full sequence is MELNSIKPAEGSKHAKRRVGRGIGSGLGKTAGRGHKGQKSRSGGYHKVGFEGGQMPLQRRLPKRGFKSHLLKFNAEVTLSALEQLGLAEVDLAALKQAGLVGEIAKVVKIIKSGEISKAVKLNGIGATAGAKAAIEAAGGSIA.

The disordered stretch occupies residues 1–56 (MELNSIKPAEGSKHAKRRVGRGIGSGLGKTAGRGHKGQKSRSGGYHKVGFEGGQMP). Over residues 21–31 (RGIGSGLGKTA) the composition is skewed to gly residues.

It belongs to the universal ribosomal protein uL15 family. Part of the 50S ribosomal subunit.

Binds to the 23S rRNA. The sequence is that of Large ribosomal subunit protein uL15 from Delftia acidovorans (strain DSM 14801 / SPH-1).